The following is a 400-amino-acid chain: Acetate kinase (400 aa).

Asn-10 lines the Mg(2+) pocket. Lys-17 is a binding site for ATP. Arg-91 provides a ligand contact to substrate. Asp-150 functions as the Proton donor/acceptor in the catalytic mechanism. ATP contacts are provided by residues 210 to 214, 285 to 287, and 333 to 337; these read HLGNG, DCR, and GIGEN. Glu-387 is a binding site for Mg(2+).

Belongs to the acetokinase family. In terms of assembly, homodimer. The cofactor is Mg(2+). Mn(2+) is required as a cofactor.

The protein localises to the cytoplasm. The catalysed reaction is acetate + ATP = acetyl phosphate + ADP. It functions in the pathway metabolic intermediate biosynthesis; acetyl-CoA biosynthesis; acetyl-CoA from acetate: step 1/2. Catalyzes the formation of acetyl phosphate from acetate and ATP. Can also catalyze the reverse reaction. This is Acetate kinase from Pectobacterium atrosepticum (strain SCRI 1043 / ATCC BAA-672) (Erwinia carotovora subsp. atroseptica).